Consider the following 485-residue polypeptide: Cytochrome P450 monooxygenase tndB (485 aa).

A helical transmembrane segment spans residues Val20–Ile40. A heme-binding site is contributed by Cys481.

This sequence belongs to the cytochrome P450 family. It depends on heme as a cofactor.

Its subcellular location is the membrane. The protein operates within secondary metabolite biosynthesis; terpenoid biosynthesis. Cytochrome P450 monooxygenase; part of the gene cluster that mediates the biosynthesis of talaronoid C, a fusicoccane diterpenoid with an unprecedented tricyclic 5/8/6 ring system. The first step in the pathway is performed by the fusicoccadiene synthase tndC that possesses both prenyl transferase and terpene cyclase activity, converting isopentenyl diphosphate and dimethylallyl diphosphate into geranylgeranyl diphosphate (GGDP) and further converting GGDP into talarodiene, a precursor for talaronoid C. The remaining enzymes from the cluster include the cytochrome P450 monooxygenase tndB, the aldehyde reductase tndE and the alcohol dehydrogenase tndF that are involved in the conversion of talarodiene into talaronoid C. The sequence is that of Cytochrome P450 monooxygenase tndB from Aspergillus flavipes.